The following is a 447-amino-acid chain: Putative branched-chain amino acid carrier protein SERP0977 (447 aa).

Transmembrane regions (helical) follow at residues 5 to 25, 40 to 60, 74 to 94, 114 to 134, 143 to 163, 193 to 213, 229 to 249, 290 to 310, 317 to 337, 350 to 370, 382 to 402, and 417 to 437; these read TWIIGFTLFAMFFGAGNLIFP, ILAFALTGIGLPLLGVVVGAL, PRFSLIFLIIIYLTIGPLFAI, GNLALFIFTVIYFLIVLYLCL, IGSLLTPLLLITIVAMIIKGF, GYLTMDAIASIAFSMIVVNAI, IIAGLIAAIALVFIYISLGYI, LLGIIVSLACLTTACGLIVSV, IIPKIPYKVFVVFFILVSFIL, VPVLSVIYPVAITVILLILIA, IPLIIVAIESILSLITTQGWI, and LEWFPIAVVATLVGYMISYFV.

Belongs to the branched chain amino acid transporter family.

Its subcellular location is the cell membrane. In terms of biological role, component of the transport system for branched-chain amino acids (leucine, isoleucine and valine), which is coupled to a proton motive force. This chain is Putative branched-chain amino acid carrier protein SERP0977, found in Staphylococcus epidermidis (strain ATCC 35984 / DSM 28319 / BCRC 17069 / CCUG 31568 / BM 3577 / RP62A).